A 339-amino-acid polypeptide reads, in one-letter code: Ureidoglycine carbamoyltransferase (339 aa).

This sequence belongs to the aspartate/ornithine carbamoyltransferase superfamily. As to quaternary structure, homodimer.

The catalysed reaction is (S)-2-ureidoglycine + carbamoyl phosphate = allantoate + phosphate + H(+). The protein operates within purine metabolism. Catalyzes the phosphorolysis of allantoate to ureidoglycine and carbamoyl phosphate. Is likely involved in a purine degradation pathway. The sequence is that of Ureidoglycine carbamoyltransferase from Rubrobacter xylanophilus (strain DSM 9941 / JCM 11954 / NBRC 16129 / PRD-1).